The following is a 158-amino-acid chain: Oocyte-secreted protein 2 (158 aa).

The N-terminal stretch at 1-17 (MALEVLMLLAVLIWTGA) is a signal peptide.

This sequence belongs to the PLAC1 family. Highly expressed in oocytes.

The protein localises to the secreted. The protein resides in the cytoplasm. Functionally, involved in oocyte maturation. This is Oocyte-secreted protein 2 (OOSP2) from Homo sapiens (Human).